The sequence spans 262 residues: Abhydrolase domain-containing protein AKT2 (262 aa).

The short motif at 260–262 (SKL) is the Peroxisomal targeting signal type 1 element.

The protein belongs to the AB hydrolase superfamily. AKT2 hydrolase family.

It is found in the peroxisome. Its pathway is mycotoxin biosynthesis. In terms of biological role, abhydrolase domain-containing protein; part of the gene clusters that mediate the biosynthesis of the host-selective toxins (HSTs) AK-toxins responsible for Japanese pear black spot disease by the Japanese pear pathotype. AK-toxins are esters of 9,10-epoxy 8-hydroxy 9-methyldecatrienoic acid (EDA). On cellular level, AK-toxins affect plasma membrane of susceptible cells and cause a sudden increase in loss of K(+) after a few minutes of toxin treatment. The acyl-CoA ligase AKT1, the hydrolase AKT2 and enoyl-CoA hydratase AKT3 are all involved in the biosynthesis of the AK-, AF- and ACT-toxin common 9,10-epoxy-8-hydroxy-9-methyl-decatrienoic acid (EDA) structural moiety. Part of the EDA biosynthesis occurs in the peroxisome since these 3 enzymes are localized in peroxisomes. The exact roles of the 3 enzymes, as well as of additional AK-toxin clusters enzymes, including AKT4, AKT6 and AKTS1, have still to be elucidated. The Cytochrome P450 monooxygenase AKT7 on the other side functions to limit production of EDA and AK-toxin, probably via the catalysis of a side reaction of EDA or its precursor. The protein is Abhydrolase domain-containing protein AKT2 of Alternaria alternata (Alternaria rot fungus).